The following is a 296-amino-acid chain: Polyamine aminopropyltransferase (296 aa).

A PABS domain is found at 5 to 238; that stretch reads ELWYETLHAN…GIMTFAWATQ (234 aa). Position 33 (Gln-33) interacts with S-methyl-5'-thioadenosine. Spermidine-binding residues include His-64 and Asp-88. S-methyl-5'-thioadenosine is bound by residues Glu-108 and 140 to 141; that span reads DG. Asp-158 functions as the Proton acceptor in the catalytic mechanism. 158–161 contacts spermidine; sequence DCTD. Residue Pro-165 participates in S-methyl-5'-thioadenosine binding.

It belongs to the spermidine/spermine synthase family. Homodimer or homotetramer.

Its subcellular location is the cytoplasm. It catalyses the reaction S-adenosyl 3-(methylsulfanyl)propylamine + putrescine = S-methyl-5'-thioadenosine + spermidine + H(+). Its pathway is amine and polyamine biosynthesis; spermidine biosynthesis; spermidine from putrescine: step 1/1. Catalyzes the irreversible transfer of a propylamine group from the amino donor S-adenosylmethioninamine (decarboxy-AdoMet) to putrescine (1,4-diaminobutane) to yield spermidine. The protein is Polyamine aminopropyltransferase of Yersinia pestis bv. Antiqua (strain Antiqua).